The primary structure comprises 163 residues: MIANGSVFKFGDNIDTDVIIPARYLNIADYKELATHCMEDIDDKFISKVKKGDIIVATKNFGCGSSREHAPIVIKESGVSCVIASTFARIFFRNSINIGLPILECEEAANNIDEGDNIEVDFSTGVIKNITKGKEYKAEPFPEFMQNIILNEGLINSIKANRG.

The protein belongs to the LeuD family. LeuD type 2 subfamily. Heterodimer of LeuC and LeuD.

It catalyses the reaction (2R,3S)-3-isopropylmalate = (2S)-2-isopropylmalate. It participates in amino-acid biosynthesis; L-leucine biosynthesis; L-leucine from 3-methyl-2-oxobutanoate: step 2/4. Catalyzes the isomerization between 2-isopropylmalate and 3-isopropylmalate, via the formation of 2-isopropylmaleate. In Clostridioides difficile (strain 630) (Peptoclostridium difficile), this protein is 3-isopropylmalate dehydratase small subunit.